The chain runs to 895 residues: Alanine--tRNA ligase (895 aa).

The Zn(2+) site is built by His-586, His-590, Cys-690, and His-694.

It belongs to the class-II aminoacyl-tRNA synthetase family. Zn(2+) serves as cofactor.

The protein resides in the cytoplasm. It carries out the reaction tRNA(Ala) + L-alanine + ATP = L-alanyl-tRNA(Ala) + AMP + diphosphate. In terms of biological role, catalyzes the attachment of alanine to tRNA(Ala) in a two-step reaction: alanine is first activated by ATP to form Ala-AMP and then transferred to the acceptor end of tRNA(Ala). Also edits incorrectly charged Ser-tRNA(Ala) and Gly-tRNA(Ala) via its editing domain. This chain is Alanine--tRNA ligase, found in Korarchaeum cryptofilum (strain OPF8).